The chain runs to 1011 residues: Probable beta-galactosidase E (1011 aa).

The first 19 residues, 1–19 (MKSLLKRLIALAAAYSVAA), serve as a signal peptide directing secretion. Residues Y92, N136, A137, E138, and N195 each contribute to the substrate site. E196 serves as the catalytic Proton donor. N202 is a glycosylation site (N-linked (GlcNAc...) asparagine). Y261 serves as a coordination point for substrate. An intrachain disulfide couples C267 to C316. E299 (nucleophile) is an active-site residue. Residue Y365 coordinates substrate. N-linked (GlcNAc...) asparagine glycosylation is found at N406, N423, N446, N455, N588, N622, N704, N745, N759, N772, N778, and N913.

Belongs to the glycosyl hydrolase 35 family.

It is found in the secreted. It carries out the reaction Hydrolysis of terminal non-reducing beta-D-galactose residues in beta-D-galactosides.. Cleaves beta-linked terminal galactosyl residues from gangliosides, glycoproteins, and glycosaminoglycans. This chain is Probable beta-galactosidase E (lacE), found in Aspergillus fumigatus (strain CBS 144.89 / FGSC A1163 / CEA10) (Neosartorya fumigata).